The chain runs to 744 residues: MPEDQAHAAMEEASPYSLLDICLSFLTTNLEKFCSARQDGTLCLQEPGVFPQEVADRLLQTIAFHGLLNDGTVGIFRGNQMRLKRACIRKAKISAVAFRKAFCHHKLVELDATGVNADITITDIISGLGSNKWIQQNLQCLVLNSLTLSLEDPYERCFSRLSGLRALSITNVLFYNEDLAEVASLPRLESLDISNTSITDITALLACKDRLKSLTMHHLKCLKMTTTQILDVVRELKHLNHLDISDDKQFTSDIALRLLEQKDILPNLVSLDVSGRKHVTDKAVEAFIQQRPSMQFVGLLATDAGYSEFLMGKGHLKVSGEANETQIAEALRRYSERAFFVREALFHLFSLTHVMEKTKPDILKLVVTGMRNHPMNLPVQLAASACVFNLTKQDLALGMPVRLLADVTHLLLKAMEHFPNHQQLQKNCLLSLCSDRILQDVPFNRFEAAKLVMQWLCNHEDQNMQRMAVAIISILAAKLSTEQTAQLGAELFIVRQLLQIVKQKTNQNSVDTTLKFTLSALWNLTDESPTTCRHFIENQGLELFMRVLESFPTESSIQQKVLGLLNNIAEVQELHSELMWKDFIDHISSLLHSVEVEVSYFAAGIIAHLISRGEQAWTLSRSQRNSLLDDLHSAILKWPTPECEMVAYRSFNPFFPLLGCFTTPGVQLWAVWAMQHVCSKNPSRYCSMLIEEGGLQHLYNIKEHEQTDPYVQQIAVAILDSLEKHIVRHGRPPPCKKQPQARLN.

3 LRR repeats span residues 185–208 (LPRL…LACK), 216–236 (MHHL…VREL), and 237–261 (KHLN…LLEQ).

Belongs to the zyg-11 family. Interacts with ELOC/Elongin C. Part of an E3 ubiquitin ligase complex including ZYG11B, CUL2 and Elongin BC.

In terms of biological role, serves as substrate adapter subunit in the E3 ubiquitin ligase complex ZYG11B-CUL2-Elongin BC. Acts redudantly with ZER1 to target substrates bearing N-terminal glycine degrons for proteasomal degradation. Involved in the clearance of proteolytic fragments generated by caspase cleavage during apoptosis since N-terminal glycine degrons are strongly enriched at caspase cleavage sites. Also important in the quality control of protein N-myristoylation in which N-terminal glycine degrons are conditionally exposed after a failure of N-myristoylation. The chain is Protein zyg-11 homolog B from Mus musculus (Mouse).